A 472-amino-acid polypeptide reads, in one-letter code: Exodeoxyribonuclease 7 large subunit (472 aa).

The protein belongs to the XseA family. Heterooligomer composed of large and small subunits.

The protein localises to the cytoplasm. It catalyses the reaction Exonucleolytic cleavage in either 5'- to 3'- or 3'- to 5'-direction to yield nucleoside 5'-phosphates.. In terms of biological role, bidirectionally degrades single-stranded DNA into large acid-insoluble oligonucleotides, which are then degraded further into small acid-soluble oligonucleotides. The protein is Exodeoxyribonuclease 7 large subunit of Carboxydothermus hydrogenoformans (strain ATCC BAA-161 / DSM 6008 / Z-2901).